The following is a 535-amino-acid chain: EH domain-containing protein 3 (535 aa).

An N-acetylmethionine modification is found at M1. A Dynamin-type G domain is found at F55–P286. Residues G65–T72 form a G1 motif region. G65 to T72 contributes to the ATP binding site. The interval E91 to P92 is G2 motif. Positions D153–G156 are G3 motif. Residues D198–Q227 adopt a coiled-coil conformation. Residues N219–D222 are G4 motif. Residue K220 participates in ATP binding. Position 243 (I243) is a region of interest, G5 motif. W258 contributes to the ATP binding site. A Glycyl lysine isopeptide (Lys-Gly) (interchain with G-Cter in SUMO) cross-link involves residue K315. Phosphoserine occurs at positions 349 and 456. Residues D444 to K532 form the EH domain. Positions L476 to K511 constitute an EF-hand domain. Residues D489, D491, D493, M495, and E500 each coordinate Ca(2+). K511 participates in a covalent cross-link: Glycyl lysine isopeptide (Lys-Gly) (interchain with G-Cter in SUMO).

The protein belongs to the TRAFAC class dynamin-like GTPase superfamily. Dynamin/Fzo/YdjA family. EHD subfamily. Homooligomer, and heterooligomer with EHD1, EHD2 and EHD4, ATP-binding is required for heterooligomerization. Interacts with PACSIN1. Interacts with PACSIN2. Interacts (via EH domain) with MICALL1. Interacts (via EH domain) with RAB11FIP2. Interacts with ANK2. Interacts with CACNA1GG and CACNA1H.

It is found in the recycling endosome membrane. Its subcellular location is the cell membrane. It localises to the cell projection. The protein localises to the cilium membrane. In terms of biological role, ATP- and membrane-binding protein that controls membrane reorganization/tubulation upon ATP hydrolysis. In vitro causes tubulation of endocytic membranes. Binding to phosphatidic acid induces its membrane tubulation activity. Plays a role in endocytic transport. Involved in early endosome to recycling endosome compartment (ERC), retrograde early endosome to Golgi, and endosome to plasma membrane (rapid recycling) protein transport. Involved in the regulation of Golgi maintenance and morphology. Involved in the recycling of internalized D1 dopamine receptor. Plays a role in cardiac protein trafficking probably implicating ANK2. Involved in the ventricular membrane targeting of SLC8A1 and CACNA1C and probably the atrial membrane localization of CACNA1GG and CACNA1H implicated in the regulation of atrial myocyte excitability and cardiac conduction. In conjunction with EHD4 may be involved in endocytic trafficking of KDR/VEGFR2 implicated in control of glomerular function. Involved in the rapid recycling of integrin beta-3 implicated in cell adhesion maintenance. Involved in the unidirectional retrograde dendritic transport of endocytosed BACE1 and in efficient sorting of BACE1 to axons implicating a function in neuronal APP processing. Plays a role in the formation of the ciliary vesicle, an early step in cilium biogenesis; possibly sharing redundant functions with Ehd1. The polypeptide is EH domain-containing protein 3 (Rattus norvegicus (Rat)).